Reading from the N-terminus, the 115-residue chain is Large ribosomal subunit protein uL24 (115 aa).

The protein belongs to the universal ribosomal protein uL24 family. As to quaternary structure, part of the 50S ribosomal subunit.

In terms of biological role, one of two assembly initiator proteins, it binds directly to the 5'-end of the 23S rRNA, where it nucleates assembly of the 50S subunit. One of the proteins that surrounds the polypeptide exit tunnel on the outside of the subunit. In Amoebophilus asiaticus (strain 5a2), this protein is Large ribosomal subunit protein uL24.